We begin with the raw amino-acid sequence, 307 residues long: Small ribosomal subunit biogenesis GTPase RsgA (307 aa).

The region spanning 64-229 is the CP-type G domain; that stretch reads KNSLIRPSIA…IADTPGFSSL (166 aa). GTP is bound by residues 113–116 and 172–180; these read SKLD and GQTGAGKTT. Residues Cys-253, Cys-258, His-260, and Cys-266 each contribute to the Zn(2+) site.

This sequence belongs to the TRAFAC class YlqF/YawG GTPase family. RsgA subfamily. In terms of assembly, monomer. Associates with 30S ribosomal subunit, binds 16S rRNA. It depends on Zn(2+) as a cofactor.

The protein localises to the cytoplasm. In terms of biological role, one of several proteins that assist in the late maturation steps of the functional core of the 30S ribosomal subunit. Helps release RbfA from mature subunits. May play a role in the assembly of ribosomal proteins into the subunit. Circularly permuted GTPase that catalyzes slow GTP hydrolysis, GTPase activity is stimulated by the 30S ribosomal subunit. The sequence is that of Small ribosomal subunit biogenesis GTPase RsgA from Lactococcus lactis subsp. lactis (strain IL1403) (Streptococcus lactis).